The sequence spans 159 residues: ATP synthase subunit b 2 (159 aa).

A helical transmembrane segment spans residues 1-21 (MDATFWALVALIIFVGILLYM).

The protein belongs to the ATPase B chain family. In terms of assembly, F-type ATPases have 2 components, F(1) - the catalytic core - and F(0) - the membrane proton channel. F(1) has five subunits: alpha(3), beta(3), gamma(1), delta(1), epsilon(1). F(0) has three main subunits: a(1), b(2) and c(10-14). The alpha and beta chains form an alternating ring which encloses part of the gamma chain. F(1) is attached to F(0) by a central stalk formed by the gamma and epsilon chains, while a peripheral stalk is formed by the delta and b chains.

The protein localises to the cell inner membrane. In terms of biological role, f(1)F(0) ATP synthase produces ATP from ADP in the presence of a proton or sodium gradient. F-type ATPases consist of two structural domains, F(1) containing the extramembraneous catalytic core and F(0) containing the membrane proton channel, linked together by a central stalk and a peripheral stalk. During catalysis, ATP synthesis in the catalytic domain of F(1) is coupled via a rotary mechanism of the central stalk subunits to proton translocation. Component of the F(0) channel, it forms part of the peripheral stalk, linking F(1) to F(0). The chain is ATP synthase subunit b 2 from Chelativorans sp. (strain BNC1).